Consider the following 61-residue polypeptide: Small ribosomal subunit protein uS14 (61 aa).

Residues cysteine 24, cysteine 27, cysteine 40, and cysteine 43 each coordinate Zn(2+).

It belongs to the universal ribosomal protein uS14 family. Zinc-binding uS14 subfamily. In terms of assembly, part of the 30S ribosomal subunit. Contacts proteins S3 and S10. Zn(2+) is required as a cofactor.

Functionally, binds 16S rRNA, required for the assembly of 30S particles and may also be responsible for determining the conformation of the 16S rRNA at the A site. The sequence is that of Small ribosomal subunit protein uS14 from Nitratiruptor sp. (strain SB155-2).